A 321-amino-acid polypeptide reads, in one-letter code: MYLYTLILLFLASVNVNAYADPGACSGNCWTHDPGLYQRKSDGKYFRFATGGGIHIASADSLEGPWTDDGYVLPNGSIIDLNGKNNLWAPDLHYRDGTYYLYYAVSSLGSQNSAIGVATSKTMEAGSWTDHGTTGIESTPASPYNAIDANWIAVGGTQYANFGSYWNNLFQVEMTNGLKVKSGATPHQIAYNASGIHRQEAAFMFERNDYFYLTFSGGIALGYNDTWPAPGEEYFISVCRSTSATGGFVDKNGVSCLNSGGTLLLASHGFVYGPGGQGILKDSSKGFVLYYHYADTRIGKAVEDYQFGWNQLKWENDWPSV.

An N-terminal signal peptide occupies residues 1–20; sequence MYLYTLILLFLASVNVNAYA. Aspartate 33 serves as the catalytic Proton acceptor. N-linked (GlcNAc...) asparagine glycans are attached at residues asparagine 75 and asparagine 192. Glutamate 200 serves as the catalytic Proton donor. Asparagine 224 carries an N-linked (GlcNAc...) asparagine glycan.

This sequence belongs to the glycosyl hydrolase 43 family.

The protein resides in the secreted. The catalysed reaction is Endohydrolysis of (1-&gt;5)-alpha-arabinofuranosidic linkages in (1-&gt;5)-arabinans.. It participates in glycan metabolism; L-arabinan degradation. Functionally, endo-1,5-alpha-L-arabinanase involved in degradation of pectin. Its preferred substrate is linear 1,5-alpha-L-arabinan. The protein is Probable arabinan endo-1,5-alpha-L-arabinosidase C (abnC) of Neosartorya fischeri (strain ATCC 1020 / DSM 3700 / CBS 544.65 / FGSC A1164 / JCM 1740 / NRRL 181 / WB 181) (Aspergillus fischerianus).